We begin with the raw amino-acid sequence, 1436 residues long: Pleiotropic drug resistance protein 1 (1436 aa).

One can recognise an ABC transporter 1 domain in the interval leucine 165 to glutamate 438. Glycine 198–threonine 205 is an ATP binding site. The ABC transmembrane type-2 1 domain occupies glutamine 516–phenylalanine 729. The next 7 helical transmembrane spans lie at phenylalanine 534–phenylalanine 554, glycine 567–serine 587, isoleucine 622–phenylalanine 642, phenylalanine 653–valine 673, valine 679–leucine 699, tryptophan 707–asparagine 727, and isoleucine 764–leucine 784. Residues threonine 796–lysine 826 are disordered. Over residues proline 810 to alanine 821 the composition is skewed to polar residues. Residues isoleucine 838–proline 1090 form the ABC transporter 2 domain. Glycine 883–threonine 890 provides a ligand contact to ATP. The ABC transmembrane type-2 2 domain occupies threonine 1163–phenylalanine 1377. Transmembrane regions (helical) follow at residues alanine 1184–isoleucine 1204, leucine 1214–serine 1234, isoleucine 1270–phenylalanine 1290, phenylalanine 1301–valine 1321, valine 1327–valine 1347, tryptophan 1358–glycine 1378, and valine 1408–isoleucine 1428.

This sequence belongs to the ABC transporter superfamily. ABCG family. PDR (TC 3.A.1.205) subfamily. As to expression, roots, petals and leaf epidermis, where it is confined to glandular trichomes (at protein level).

The protein resides in the cell membrane. Excretes secondary metabolites such as terpenes. Involved in both constitutive and jasmonic acid-dependent induced defense. Confers some resistance to sclareol and B.cinerea. The chain is Pleiotropic drug resistance protein 1 (PDR1) from Nicotiana plumbaginifolia (Leadwort-leaved tobacco).